The primary structure comprises 129 residues: Small ribosomal subunit protein uS11 (129 aa).

The protein belongs to the universal ribosomal protein uS11 family. As to quaternary structure, part of the 30S ribosomal subunit. Interacts with proteins S7 and S18. Binds to IF-3.

Functionally, located on the platform of the 30S subunit, it bridges several disparate RNA helices of the 16S rRNA. Forms part of the Shine-Dalgarno cleft in the 70S ribosome. This is Small ribosomal subunit protein uS11 from Limosilactobacillus reuteri (strain DSM 20016) (Lactobacillus reuteri).